Reading from the N-terminus, the 335-residue chain is 2,4-dienoyl-CoA reductase [(3E)-enoyl-CoA-producing], mitochondrial (335 aa).

A mitochondrion-targeting transit peptide spans 1-34 (MKLPARVFFTLGSRLPCGLAPRRFFSYGTKILYQ). N6-acetyllysine; alternate occurs at positions 42 and 49. 2 positions are modified to N6-succinyllysine; alternate: Lys-42 and Lys-49. NADP(+) is bound at residue 66–71 (GGGTGL). Position 69 is a phosphothreonine (Thr-69). Lys-73 is subject to N6-succinyllysine. Arg-91 contacts NADP(+). Arg-91 contributes to the substrate binding site. N6-acetyllysine; alternate is present on Lys-97. Lys-97 is subject to N6-succinyllysine; alternate. NADP(+) is bound at residue Asp-117. 3 residues coordinate substrate: Arg-119, Phe-149, and Ser-157. Tyr-199 acts as the Proton acceptor in catalysis. An NADP(+)-binding site is contributed by Lys-214. Lys-230 bears the N6-acetyllysine mark. 240 to 243 (PGPI) serves as a coordination point for NADP(+). An N6-acetyllysine; alternate modification is found at Lys-244. Lys-244 is subject to N6-succinyllysine; alternate. Residue Arg-251 coordinates substrate. Lys-260 and Lys-319 each carry N6-acetyllysine; alternate. An N6-succinyllysine; alternate mark is found at Lys-260 and Lys-319.

This sequence belongs to the short-chain dehydrogenases/reductases (SDR) family. 2,4-dienoyl-CoA reductase subfamily. In terms of assembly, homotetramer. In terms of tissue distribution, heart = liver = pancreas &gt; kidney &gt;&gt; skeletal muscle = lung.

It is found in the mitochondrion. It carries out the reaction a (2E,4E)-dienoyl-CoA + NADPH + H(+) = a 4,5-saturated-(3E)-enoyl-CoA + NADP(+). It catalyses the reaction a (2E,4Z)-dienoyl-CoA + NADPH + H(+) = a 4,5-saturated-(3E)-enoyl-CoA + NADP(+). The catalysed reaction is (2E,4E)-hexadienoyl-CoA + NADPH + H(+) = (3E)-hexenoyl-CoA + NADP(+). Its function is as follows. Auxiliary enzyme of beta-oxidation. It participates in the metabolism of unsaturated fatty enoyl-CoA esters having double bonds in both even- and odd-numbered positions in mitochondria. Catalyzes the NADP-dependent reduction of 2,4-dienoyl-CoA to yield trans-3-enoyl-CoA. The protein is 2,4-dienoyl-CoA reductase [(3E)-enoyl-CoA-producing], mitochondrial (DECR1) of Homo sapiens (Human).